Reading from the N-terminus, the 151-residue chain is Large ribosomal subunit protein bL9 (151 aa).

This sequence belongs to the bacterial ribosomal protein bL9 family.

Functionally, binds to the 23S rRNA. This Pseudothermotoga lettingae (strain ATCC BAA-301 / DSM 14385 / NBRC 107922 / TMO) (Thermotoga lettingae) protein is Large ribosomal subunit protein bL9.